The primary structure comprises 1368 residues: DNA-directed RNA polymerase subunit beta (1368 aa).

This sequence belongs to the RNA polymerase beta chain family. In terms of assembly, the RNAP catalytic core consists of 2 alpha, 1 beta, 1 beta' and 1 omega subunit. When a sigma factor is associated with the core the holoenzyme is formed, which can initiate transcription.

The enzyme catalyses RNA(n) + a ribonucleoside 5'-triphosphate = RNA(n+1) + diphosphate. Its function is as follows. DNA-dependent RNA polymerase catalyzes the transcription of DNA into RNA using the four ribonucleoside triphosphates as substrates. In Ralstonia pickettii (strain 12J), this protein is DNA-directed RNA polymerase subunit beta.